Here is a 307-residue protein sequence, read N- to C-terminus: Nucleotide-binding protein AAur_2084 (307 aa).

The tract at residues 1-21 (MDEATAKSGTEQDGLTPVKPP) is disordered. 30-37 (GMSGAGRS) contacts ATP. Residue 81 to 84 (DVRS) participates in GTP binding.

It belongs to the RapZ-like family.

Functionally, displays ATPase and GTPase activities. The chain is Nucleotide-binding protein AAur_2084 from Paenarthrobacter aurescens (strain TC1).